We begin with the raw amino-acid sequence, 1156 residues long: Nuclear pore-associated protein 1 (1156 aa).

Disordered stretches follow at residues 1–60 (MGNL…RRPS), 155–204 (EGPR…FRCS), 219–266 (NSMS…PEPA), 481–515 (GGSY…TRES), 680–703 (TLVN…MHTT), 732–786 (NTQP…KTSL), 872–915 (STSF…SSFI), and 1026–1046 (APGP…SGTP). Residues 50–59 (LFRRNARRRP) show a composition bias toward basic residues. Basic and acidic residues predominate over residues 156 to 165 (GPRRVKKDED). 2 stretches are compositionally biased toward polar residues: residues 179–197 (PLSS…TQGD) and 219–231 (NSMS…SPAS). 4 stretches are compositionally biased toward polar residues: residues 680-692 (TLVN…SSSK), 732-750 (NTQP…SLPA), 884-915 (TTTS…SSFI), and 1028-1046 (GPSS…SGTP).

In terms of assembly, associates with the nuclear pore complex (NPC). In terms of tissue distribution, testis-specific in adults. In fetal brain expressed only from the paternal allele.

Its subcellular location is the nucleus. The protein resides in the nucleoplasm. It localises to the nucleus inner membrane. Its function is as follows. May be involved in spermatogenesis. This Homo sapiens (Human) protein is Nuclear pore-associated protein 1 (NPAP1).